The following is a 174-amino-acid chain: Large ribosomal subunit protein uL15 (174 aa).

2 disordered regions span residues 1-57 (MKLH…QMRI) and 147-174 (PWVV…PQKA). The span at 21–35 (RGIGSGKGKTGGKGM) shows a compositional bias: gly residues.

It belongs to the universal ribosomal protein uL15 family. Part of the 50S ribosomal subunit.

Functionally, binds to the 23S rRNA. The polypeptide is Large ribosomal subunit protein uL15 (Roseiflexus sp. (strain RS-1)).